Consider the following 385-residue polypeptide: MKNITILGATGSIGTQTLDVIRKEKEELKLVAISANKSYKKVIEIIKEFKPKYAVLMEENAFKIVEDFCIDNKIDTKVLKGMEGMIYISTLEEVNTVVTSVVGMIGLVPTIKAIESGKDIALANKETLVVAGELVISKAKEHNVNILPVDSEHGAIFQCLRGNKKEEVKNIIVTASGGPFRGKKKEELIEVKPEHALKHPKWNMGRKISIDSATLMNKGLEVIEAHFLFGVDYENIKVVVHPQSIVHSMVEYKDGSVIAQMATPDMKLPIQYALNYPNRKESQIEPLDFYKISNLTFEKPDMDTFLPLKLAYEAGEKGGVMPAILNGANEVAVDLFLKGKIEFLQIGDLLQECMNKFYKSMEATLENVISVDKEVREYLGKKYDI.

NADPH-binding residues include T10, G11, S12, I13, K37, and N124. K125 lines the 1-deoxy-D-xylulose 5-phosphate pocket. An NADPH-binding site is contributed by E126. D150 provides a ligand contact to Mn(2+). Residues S151, E152, S176, and H199 each contribute to the 1-deoxy-D-xylulose 5-phosphate site. Residue E152 coordinates Mn(2+). G205 is a binding site for NADPH. 1-deoxy-D-xylulose 5-phosphate contacts are provided by S212, N217, K218, and E221. Residue E221 participates in Mn(2+) binding.

The protein belongs to the DXR family. Mg(2+) serves as cofactor. Mn(2+) is required as a cofactor.

It catalyses the reaction 2-C-methyl-D-erythritol 4-phosphate + NADP(+) = 1-deoxy-D-xylulose 5-phosphate + NADPH + H(+). The protein operates within isoprenoid biosynthesis; isopentenyl diphosphate biosynthesis via DXP pathway; isopentenyl diphosphate from 1-deoxy-D-xylulose 5-phosphate: step 1/6. Functionally, catalyzes the NADPH-dependent rearrangement and reduction of 1-deoxy-D-xylulose-5-phosphate (DXP) to 2-C-methyl-D-erythritol 4-phosphate (MEP). In Clostridium botulinum (strain Okra / Type B1), this protein is 1-deoxy-D-xylulose 5-phosphate reductoisomerase.